We begin with the raw amino-acid sequence, 655 residues long: D-xylonate dehydratase YagF (655 aa).

The protein belongs to the IlvD/Edd family.

It carries out the reaction D-xylonate = 2-dehydro-3-deoxy-D-arabinonate + H2O. Its function is as follows. Catalyzes the dehydration of D-xylonic acid to form 2-dehydro-3-deoxy-D-pentonate. The protein is D-xylonate dehydratase YagF (yagF) of Escherichia coli (strain K12).